A 575-amino-acid chain; its full sequence is Adenine deaminase 1 (575 aa).

The protein belongs to the metallo-dependent hydrolases superfamily. Adenine deaminase family. It depends on Mn(2+) as a cofactor.

The catalysed reaction is adenine + H2O + H(+) = hypoxanthine + NH4(+). This Agrobacterium fabrum (strain C58 / ATCC 33970) (Agrobacterium tumefaciens (strain C58)) protein is Adenine deaminase 1.